The sequence spans 125 residues: Small ribosomal subunit protein uS12 (125 aa).

The residue at position 89 (Asp89) is a 3-methylthioaspartic acid.

The protein belongs to the universal ribosomal protein uS12 family. As to quaternary structure, part of the 30S ribosomal subunit. Contacts proteins S8 and S17. May interact with IF1 in the 30S initiation complex.

Its function is as follows. With S4 and S5 plays an important role in translational accuracy. In terms of biological role, interacts with and stabilizes bases of the 16S rRNA that are involved in tRNA selection in the A site and with the mRNA backbone. Located at the interface of the 30S and 50S subunits, it traverses the body of the 30S subunit contacting proteins on the other side and probably holding the rRNA structure together. The combined cluster of proteins S8, S12 and S17 appears to hold together the shoulder and platform of the 30S subunit. This Ralstonia nicotianae (strain ATCC BAA-1114 / GMI1000) (Ralstonia solanacearum) protein is Small ribosomal subunit protein uS12.